The chain runs to 260 residues: Protein TONNEAU 1a (260 aa).

Residues 73–105 form the LisH domain; that stretch reads SGRLLSALICEYLDWAQLNHTLIVYQPESNLPK. Disordered stretches follow at residues 147-224 and 236-260; these read TQGM…EEVT and DRKT…EGRD. Positions 161–175 are enriched in low complexity; sequence ESSSSLESRNPPRRS. Over residues 248–260 the composition is skewed to basic and acidic residues; sequence NVRDGTNEEEGRD.

As to quaternary structure, interacts with CEN1, LNG1/TRM2 and LNG2/TRM1 (via C-terminus).

The protein localises to the cytoplasm. The protein resides in the cytoskeleton. Involved in the control of the dynamic organization of the cortical cytoskeleton. May play a role in the organization of microtubule arrays at the centrosome through interaction with centrin 1 (CEN1). This Arabidopsis thaliana (Mouse-ear cress) protein is Protein TONNEAU 1a (TON1A).